The primary structure comprises 327 residues: Aquaporin-1 (327 aa).

The interval 1 to 34 (MSSNDSNDTDKQHTRLDPTGVDDAYIPPEQPETK) is disordered. The Cytoplasmic portion of the chain corresponds to 1–48 (MSSNDSNDTDKQHTRLDPTGVDDAYIPPEQPETKHHRFKISKDTLRNH). Residues 49–69 (FIAAAGEFCGTFMFLWCAYVI) form a helical membrane-spanning segment. At 70-91 (CNVANHDVALVAAPDGSHPGQL) the chain is on the extracellular side. A helical transmembrane segment spans residues 92–112 (IMIAIGFGFSVMFSIWCFAGV). At 113-136 (SGGALNPAVSLSLCLARAVSPTRC) the chain is on the cytoplasmic side. An NPA 1 motif is present at residues 118–120 (NPA). Residues 137–157 (VVMWVSQIVAGMAAGGAASAM) traverse the membrane as a helical segment. Residues 158-176 (TPGEVLFANSLGLGCSRTR) lie on the Extracellular side of the membrane. The helical transmembrane segment at 177 to 197 (GLFLEMFGTAILCLTVLMTAV) threads the bilayer. Residues 198 to 203 (EKRETN) lie on the Cytoplasmic side of the membrane. The chain crosses the membrane as a helical span at residues 204-224 (FMAALPIGISLFIAHVALTAY). The Extracellular segment spans residues 225 to 248 (TGTGVNPARSLGAAVAARYFPHYH). The short motif at 230–232 (NPA) is the NPA 2 element. Residues 249 to 269 (WIYWIGPLLGSILAWSVWQLL) traverse the membrane as a helical segment. Over 270–327 (QILDYTTYVTAEKAASTKEKAQKKVKPAVPLLWLKSNFSLLFFISRSLALNVIIFGKN) the chain is Cytoplasmic.

It belongs to the MIP/aquaporin (TC 1.A.8) family.

The protein resides in the endoplasmic reticulum membrane. It is found in the cell membrane. Its function is as follows. Water channel required to facilitate the transport of water across membranes. Involved in sporulation, freeze tolerance and osmotolerance. Is non-functional in most laboratory strains. In Saccharomyces cerevisiae (strain Lalvin EC1118 / Prise de mousse) (Baker's yeast), this protein is Aquaporin-1 (AQY1).